The following is a 519-amino-acid chain: Glucose-1-phosphate adenylyltransferase large subunit 3, chloroplastic/amyloplastic (519 aa).

The transit peptide at 1–74 directs the protein to the chloroplast; the sequence is MQFSSVFPLE…DAGPDTLHVR (74 aa).

This sequence belongs to the bacterial/plant glucose-1-phosphate adenylyltransferase family. Heterotetramer composed of two small and two large subunits. In terms of tissue distribution, expressed in stems.

The protein resides in the plastid. Its subcellular location is the chloroplast. It carries out the reaction alpha-D-glucose 1-phosphate + ATP + H(+) = ADP-alpha-D-glucose + diphosphate. The protein operates within glycan biosynthesis; starch biosynthesis. With respect to regulation, activated by 3'phosphoglycerate, inhibited by orthophosphate. Allosteric regulation. Functionally, involved in synthesis of starch. Catalyzes the synthesis of ADP-glucose, a molecule that serves as an activated glycosyl donor for alpha-1,4-glucan synthesis. Essential for starch synthesis in leaf chloroplasts. The sequence is that of Glucose-1-phosphate adenylyltransferase large subunit 3, chloroplastic/amyloplastic from Oryza sativa subsp. japonica (Rice).